A 504-amino-acid chain; its full sequence is ATP synthase subunit alpha, chloroplastic (504 aa).

Residue 170-177 (GDRQTGKT) participates in ATP binding. A Phosphothreonine modification is found at threonine 257.

The protein belongs to the ATPase alpha/beta chains family. In terms of assembly, F-type ATPases have 2 components, CF(1) - the catalytic core - and CF(0) - the membrane proton channel. CF(1) has five subunits: alpha(3), beta(3), gamma(1), delta(1), epsilon(1). CF(0) has four main subunits: a, b, b' and c.

The protein resides in the plastid. Its subcellular location is the chloroplast thylakoid membrane. The catalysed reaction is ATP + H2O + 4 H(+)(in) = ADP + phosphate + 5 H(+)(out). In terms of biological role, produces ATP from ADP in the presence of a proton gradient across the membrane. The alpha chain is a regulatory subunit. This Nasturtium officinale (Watercress) protein is ATP synthase subunit alpha, chloroplastic.